The primary structure comprises 525 residues: NAD(P)H-quinone oxidoreductase subunit 2 (525 aa).

14 consecutive transmembrane segments (helical) span residues 14-34, 42-62, 78-98, 117-137, 167-187, 201-221, 240-260, 276-296, 302-322, 330-350, 374-394, 396-416, 462-482, and 494-514; these read AIWP…VDLV, SLPA…VLQW, PVSI…VMMA, LTAT…MVFV, LLTG…LYGL, LANA…GIGF, PTPV…ALAI, AVLS…AIAQ, LLAY…VAGT, IFYL…VTLF, LCLS…GFFG, LYLF…VGLV, VGMV…NPLF, and FLGF…SLAV.

It belongs to the complex I subunit 2 family. NDH-1 can be composed of about 15 different subunits; different subcomplexes with different compositions have been identified which probably have different functions.

It localises to the cellular thylakoid membrane. It catalyses the reaction a plastoquinone + NADH + (n+1) H(+)(in) = a plastoquinol + NAD(+) + n H(+)(out). The enzyme catalyses a plastoquinone + NADPH + (n+1) H(+)(in) = a plastoquinol + NADP(+) + n H(+)(out). In terms of biological role, NDH-1 shuttles electrons from an unknown electron donor, via FMN and iron-sulfur (Fe-S) centers, to quinones in the respiratory and/or the photosynthetic chain. The immediate electron acceptor for the enzyme in this species is believed to be plastoquinone. Couples the redox reaction to proton translocation, and thus conserves the redox energy in a proton gradient. Cyanobacterial NDH-1 also plays a role in inorganic carbon-concentration. The protein is NAD(P)H-quinone oxidoreductase subunit 2 of Synechococcus sp. (strain JA-3-3Ab) (Cyanobacteria bacterium Yellowstone A-Prime).